Consider the following 235-residue polypeptide: Ribosomal RNA small subunit methyltransferase G (235 aa).

S-adenosyl-L-methionine is bound by residues Gly-98, Met-103, 149-150 (VE), and Arg-164.

It belongs to the methyltransferase superfamily. RNA methyltransferase RsmG family.

It is found in the cytoplasm. The enzyme catalyses guanosine(527) in 16S rRNA + S-adenosyl-L-methionine = N(7)-methylguanosine(527) in 16S rRNA + S-adenosyl-L-homocysteine. Its function is as follows. Specifically methylates the N7 position of guanine in position 527 of 16S rRNA. This Cupriavidus metallidurans (strain ATCC 43123 / DSM 2839 / NBRC 102507 / CH34) (Ralstonia metallidurans) protein is Ribosomal RNA small subunit methyltransferase G.